The primary structure comprises 295 residues: tRNA dimethylallyltransferase (295 aa).

11–18 contacts ATP; the sequence is GPTVSGKS. 13-18 provides a ligand contact to substrate; sequence TVSGKS. Interaction with substrate tRNA stretches follow at residues 36 to 39 and 158 to 162; these read DSMQ and QRIIR.

The protein belongs to the IPP transferase family. As to quaternary structure, monomer. Mg(2+) is required as a cofactor.

It carries out the reaction adenosine(37) in tRNA + dimethylallyl diphosphate = N(6)-dimethylallyladenosine(37) in tRNA + diphosphate. In terms of biological role, catalyzes the transfer of a dimethylallyl group onto the adenine at position 37 in tRNAs that read codons beginning with uridine, leading to the formation of N6-(dimethylallyl)adenosine (i(6)A). The chain is tRNA dimethylallyltransferase from Bartonella quintana (strain Toulouse) (Rochalimaea quintana).